A 235-amino-acid polypeptide reads, in one-letter code: Geranylgeranylglyceryl phosphate synthase (235 aa).

Residue Lys13 coordinates sn-glycerol 1-phosphate. Residues Asp15 and Thr42 each coordinate Mg(2+). Sn-glycerol 1-phosphate is bound by residues 162–167, Gly192, and 212–213; these read YVEYSG and GD.

Belongs to the GGGP/HepGP synthase family. Group I subfamily. Mg(2+) is required as a cofactor.

The protein resides in the cytoplasm. It carries out the reaction sn-glycerol 1-phosphate + (2E,6E,10E)-geranylgeranyl diphosphate = sn-3-O-(geranylgeranyl)glycerol 1-phosphate + diphosphate. It functions in the pathway membrane lipid metabolism; glycerophospholipid metabolism. In terms of biological role, prenyltransferase that catalyzes the transfer of the geranylgeranyl moiety of geranylgeranyl diphosphate (GGPP) to the C3 hydroxyl of sn-glycerol-1-phosphate (G1P). This reaction is the first ether-bond-formation step in the biosynthesis of archaeal membrane lipids. The sequence is that of Geranylgeranylglyceryl phosphate synthase from Natronomonas pharaonis (strain ATCC 35678 / DSM 2160 / CIP 103997 / JCM 8858 / NBRC 14720 / NCIMB 2260 / Gabara) (Halobacterium pharaonis).